The following is a 695-amino-acid chain: A-kinase anchor protein 17A (695 aa).

The PKA-RI and PKA-RII subunit binding domain stretch occupies residues 83 to 112 (VENKSLVKSFLACLDGKTIKLSGFSDILKV). A Glycyl lysine isopeptide (Lys-Gly) (interchain with G-Cter in SUMO1); alternate cross-link involves residue Lys118. Lys118 is covalently cross-linked (Glycyl lysine isopeptide (Lys-Gly) (interchain with G-Cter in SUMO2); alternate). Residues 147–256 (DTIHLEGLPC…KAVACNIKVS (110 aa)) form the RRM domain. The disordered stretch occupies residues 279–337 (QELEQQREEQKRREKEAEERQRAEERKQKELEELERERKREEKLRKREQKQRDRELRRN). Positions 425–454 (LGLQRKERELRERLLSILLSKKPDDSHTHD) are PKA-RI-alpha subunit binding domain. The interval 482-695 (TTLHPLGGQP…PSRHRSTWNR (214 aa)) is disordered. The residue at position 537 (Ser537) is a Phosphoserine. Residues 567–585 (VSRKDTRSEQDKCNREPSK) show a composition bias toward basic and acidic residues. Basic residues-rich tracts occupy residues 598–609 (RHKRERSRARRA) and 618–628 (RKERRPHKKHA). Over residues 629 to 644 (YKDDSPRRRSTSPDHT) the composition is skewed to basic and acidic residues. At Ser633 the chain carries Phosphoserine. Composition is skewed to basic residues over residues 645 to 658 (RSRR…HRRE) and 666 to 695 (SASR…TWNR).

As to quaternary structure, monomer. Component of the spliceosome. Interacts with ZRANB2 and SFRS1/ASF through its Arg/Ser-rich domain. Interacts with RI and RII subunits of PKA. As to expression, widely expressed. Found in heart, brain, lung, liver, skeletal muscle, kidney and pancreas. Expressed in activated B-cells and placenta. Expressed in all cell lines tested including Jurkat-TAg, U-937 and HEK293 cells.

Its subcellular location is the nucleus speckle. Functionally, splice factor regulating alternative splice site selection for certain mRNA precursors. Mediates regulation of pre-mRNA splicing in a PKA-dependent manner. This chain is A-kinase anchor protein 17A (AKAP17A), found in Homo sapiens (Human).